The following is a 248-amino-acid chain: MAAQSAPKVVLKSTTKMSLNERFTNMLKNKQPMPVNIWASMQQQQQLASARNRRLAQQMENRPSVQAALKLKQSLKQRLGKSNIQARLGRPIGALARGAIGGRSLPIIQRGLPRGGLRGGRATRTLLRGGMSLRGQNLLRGGRAVAPRMGLRRGGVRGRGGPGRGGLGRGAMGRGGIGGRGRGMIGRGRGGFGGRGRGRGRGRGALTRPVLTKEQLDNQLDAYMSKTKGHLDAELDAYMAQTDPETND.

At alanine 2 the chain carries N-acetylalanine. Phosphoserine occurs at positions 40, 49, and 64. Lysine 70 is covalently cross-linked (Glycyl lysine isopeptide (Lys-Gly) (interchain with G-Cter in SUMO2)). The segment at 151–204 is disordered; it reads LRRGGVRGRGGPGRGGLGRGAMGRGGIGGRGRGMIGRGRGGFGGRGRGRGRGRG. The segment at 153 to 206 is interaction with PRMT1; sequence RGGVRGRGGPGRGGLGRGAMGRGGIGGRGRGMIGRGRGGFGGRGRGRGRGRGAL. The segment covering 157 to 195 has biased composition (gly residues); it reads RGRGGPGRGGLGRGAMGRGGIGGRGRGMIGRGRGGFGGR. Residues 194 to 203 carry the GAR motif; involved in 5hmC binding motif; sequence GRGRGRGRGR. Phosphothreonine is present on threonine 242.

Interacts with PRMT1 and PRMT5. Interacts with the 5FMC complex; the interaction is methylation-dependent. Interacts with FYTTD1, SET and PRC1 complex members CBX4, RNF2 and PHC2; the interactions are methylation-independent. Interacts with ZNF148. Interacts with WDR77 and ER. Asymmetrically methylated by PRMT1. Symmetrically methylated by PRMT5.

Its subcellular location is the nucleus. It localises to the nucleolus. It is found in the nucleoplasm. The protein localises to the nucleus speckle. Functionally, plays an important role in the ligand-dependent activation of estrogen receptor target genes. May play a role in the silencing of fetal globin genes. Recruits the 5FMC complex to ZNF148, leading to desumoylation of ZNF148 and subsequent transactivation of ZNF148 target genes. Required for the tumorigenicity of glioblastoma cells. Binds to 5-hydroxymethylcytosine (5hmC) and associates with the methylosome complex containing PRMT1, PRMT5, MEP50 and ERH. The CHTOP-methylosome complex associated with 5hmC methylates H4R3 and transactivates genes involved in glioblastomagenesis. The chain is Chromatin target of PRMT1 protein (Chtop) from Rattus norvegicus (Rat).